The following is a 136-amino-acid chain: Protein YebF (136 aa).

The first 23 residues, 1-23, serve as a signal peptide directing secretion; that stretch reads MKKTGLALVLATILLGMMGSVHA. Positions 30 to 117 constitute a YebF/Cmi domain; it reads KVPACIGLNQ…KSGTMTYTGL (88 aa). C34 and C107 are oxidised to a cystine. The tract at residues 117–136 is disordered; that stretch reads LNAQTRPDPQIGLNSQAGPK.

It belongs to the YebF family.

It localises to the secreted. In Yersinia pseudotuberculosis serotype O:1b (strain IP 31758), this protein is Protein YebF.